Here is a 56-residue protein sequence, read N- to C-terminus: Alpha-conotoxin EpI (56 aa).

A signal peptide spans 1 to 16; sequence MFTVFLLVVLATTVVS. The propeptide occupies 17–39; the sequence is FTSDRASDSRKDAASGLIALTIK. 2 cysteine pairs are disulfide-bonded: Cys-41/Cys-47 and Cys-42/Cys-55. Residues 43 to 45 form a ser-Xaa-Pro motif, crucial for potent interaction with nAChR region; sequence SDP. Tyr-54 carries the sulfotyrosine modification. Cys-55 bears the Cysteine amide mark.

The protein belongs to the conotoxin A superfamily. In terms of processing, both tyrosine sulfation and C-terminal amidation are important for activity and structure stability. As to expression, expressed by the venom duct.

Its subcellular location is the secreted. Its function is as follows. Alpha-conotoxins act on postsynaptic membranes, they bind to the nicotinic acetylcholine receptors (nAChR) and thus inhibit them. This native peptide blocks mammalian nicotinic acetylcholine receptors composed of alpha-3-beta-2/CHRNA3-CHRNB2 and alpha-3-beta-4/CHRNA3-CHRNB4 subunits. This Conus episcopatus (Bishop's cone) protein is Alpha-conotoxin EpI.